Here is a 345-residue protein sequence, read N- to C-terminus: Heat-inducible transcription repressor HrcA (345 aa).

This sequence belongs to the HrcA family.

Functionally, negative regulator of class I heat shock genes (grpE-dnaK-dnaJ and groELS operons). Prevents heat-shock induction of these operons. This Zymomonas mobilis subsp. mobilis (strain ATCC 31821 / ZM4 / CP4) protein is Heat-inducible transcription repressor HrcA.